The following is a 191-amino-acid chain: Transcription factor HES-2 (191 aa).

Positions 1 to 26 (MAPNVALADSMHNYQPKPGKRNQEAS) are disordered. Positions 28–85 (LRKTLKPLMEKRRRARINESLNQLKTLILPLIGKDNSRYSKLEKADILEMTVRFLRDI) constitute a bHLH domain. An Orange domain is found at 97 to 130 (YKEGYRACVERLSAILGKSHVLTGEASNRLLEYL). Polar residues-rich tracts occupy residues 159 to 173 (RTSQFGSPLQNQPSS) and 182 to 191 (QLNSSIWRPW). A disordered region spans residues 159–191 (RTSQFGSPLQNQPSSHRPAPCPPQLNSSIWRPW). The short motif at 188–191 (WRPW) is the WRPW motif element.

As to quaternary structure, transcription repression requires formation of a complex with a corepressor protein of the Groucho/TLE family. Homodimer, and heterodimer with the other bHLH proteins neurod1, neurod4/ath3, hes1/hairy1 and hes6r. Weakly interacts with the bHLH protein hey1/hrt1. Expressed in the animal half of the early cleavage stage embryo. During neurulation and organogenesis, the otic vesicles and retina are the main sites of expression; expression in otic placodes begins as early as stage 13.5, persisting in the otic vesicles at stage 30 and beyond. Also transiently expressed in the olfactory placodes. In addition, weakly expressed in primary neurons. Expression in the retina begins at stage 21, and is seen throughout the neural retina by stage 30. From stage 35 onwards, expression progressively declines in the central retina, while remaining high in the margins. At stage 41, expression becomes restricted to the ciliary marginal zone (CMZ) of the retina, the only region where retinogenesis is still occurring.

The protein localises to the nucleus. Its function is as follows. Transcriptional repressor. Essential in the retina to govern glial versus neuronal differentiation. Promotes gliogenesis through the inhibition of neuronal differentiation by at least two distinct mechanisms; represses proneural gene transcription, and also physically interacts with proneural proteins, including neurod1. The protein is Transcription factor HES-2 (hes2) of Xenopus laevis (African clawed frog).